The chain runs to 393 residues: Chalcone synthase LF2 (393 aa).

Residue cysteine 164 is part of the active site.

This sequence belongs to the thiolase-like superfamily. Chalcone/stilbene synthases family.

It catalyses the reaction (E)-4-coumaroyl-CoA + 3 malonyl-CoA + 3 H(+) = 2',4,4',6'-tetrahydroxychalcone + 3 CO2 + 4 CoA. It participates in secondary metabolite biosynthesis; flavonoid biosynthesis. The primary product of this enzyme is 4,2',4',6'-tetrahydroxychalcone (also termed naringenin-chalcone or chalcone) which can under specific conditions spontaneously isomerize into naringenin. The polypeptide is Chalcone synthase LF2 (CHS-LF2) (Ipomoea batatas (Sweet potato)).